Reading from the N-terminus, the 204-residue chain is High mobility group-T protein (204 aa).

DNA-binding regions (HMG box) lie at residues 8 to 78 (PRGK…RSYI) and 94 to 162 (PKRP…TAYR). The interval 162-204 (RNKGKVPVSMPAKAAAPAKDDDDDDDDDDDDEDDDDDDDEDDE) is disordered. Positions 181–204 (DDDDDDDDDDDDEDDDDDDDEDDE) are enriched in acidic residues.

This sequence belongs to the HMGB family.

It localises to the nucleus. Its subcellular location is the chromosome. Its function is as follows. Binds preferentially single-stranded DNA and unwinds double-stranded DNA. This is High mobility group-T protein from Oncorhynchus mykiss (Rainbow trout).